The sequence spans 204 residues: MGAYKYLEELWRKKQSDLMSFILRLRTWEYRQLPVIHKASRSSRPDKARKLGYKNKDGYAIWRVRVRRGGRKRPVSKGIVYGKPSSVGINQLKFARNLRSCAEERVGKRVPELRVLNSYWVGQDGTYKFYEVILADPSHNAIRNDPRINWICESAHKHRELRGLTSAGRKGRGLRVKGHRAKSLRTSRKGNWRARQMLKLRRYR.

The protein belongs to the eukaryotic ribosomal protein eL15 family.

This Tetrahymena thermophila (strain SB210) protein is Large ribosomal subunit protein eL15 (RPL15).